Reading from the N-terminus, the 401-residue chain is Argininosuccinate synthase (401 aa).

8-16 contacts ATP; sequence AYSGGLDTS. An L-citrulline-binding site is contributed by Y87. Residue G117 coordinates ATP. Residues T119, N123, and D124 each coordinate L-aspartate. N123 lines the L-citrulline pocket. Residues R127, S175, E259, and Y271 each coordinate L-citrulline.

This sequence belongs to the argininosuccinate synthase family. Type 1 subfamily. Homotetramer.

The protein localises to the cytoplasm. It catalyses the reaction L-citrulline + L-aspartate + ATP = 2-(N(omega)-L-arginino)succinate + AMP + diphosphate + H(+). It participates in amino-acid biosynthesis; L-arginine biosynthesis; L-arginine from L-ornithine and carbamoyl phosphate: step 2/3. The protein is Argininosuccinate synthase of Corynebacterium efficiens (strain DSM 44549 / YS-314 / AJ 12310 / JCM 11189 / NBRC 100395).